The primary structure comprises 185 residues: Intraflagellar transport protein 22 homolog (185 aa).

Residues 10–17 (GPCESGKT), 63–67 (DCGGD), and 123–126 (HKPG) contribute to the GTP site. Ser137 bears the Phosphoserine mark.

It belongs to the small GTPase superfamily. Rab family. As to quaternary structure, component of the IFT complex B, at least composed of IFT20, IFT22, IFT25, IFT27, IFT46, IFT52, TRAF3IP1/IFT54, IFT57, IFT74, IFT80, IFT81, and IFT88. Interacts with IFT88. Interacts with CFAP61.

It localises to the cell projection. It is found in the cilium. Functionally, small GTPase-like component of the intraflagellar transport (IFT) complex B. This is Intraflagellar transport protein 22 homolog (IFT22) from Homo sapiens (Human).